Consider the following 587-residue polypeptide: Aspartate--tRNA ligase (587 aa).

E174 lines the L-aspartate pocket. An aspartate region spans residues Q198–K201. R220 lines the L-aspartate pocket. Residues R220–E222 and Q229 each bind ATP. L-aspartate is bound at residue H443. Position 477 (E477) interacts with ATP. R484 lines the L-aspartate pocket. G529–R532 contacts ATP.

The protein belongs to the class-II aminoacyl-tRNA synthetase family. Type 1 subfamily. Homodimer.

It is found in the cytoplasm. The catalysed reaction is tRNA(Asp) + L-aspartate + ATP = L-aspartyl-tRNA(Asp) + AMP + diphosphate. Functionally, catalyzes the attachment of L-aspartate to tRNA(Asp) in a two-step reaction: L-aspartate is first activated by ATP to form Asp-AMP and then transferred to the acceptor end of tRNA(Asp). The polypeptide is Aspartate--tRNA ligase (Streptococcus pneumoniae serotype 2 (strain D39 / NCTC 7466)).